Reading from the N-terminus, the 115-residue chain is UPF0102 protein NGO_1987 (115 aa).

Belongs to the UPF0102 family.

This chain is UPF0102 protein NGO_1987, found in Neisseria gonorrhoeae (strain ATCC 700825 / FA 1090).